The primary structure comprises 287 residues: MDVDELISSSKLLKHWPSLFITLALIWIVKRLFFKGNRVLKTYNLDEQVEEEVEHFADLGDELQPALEDKPHVPFVPGQNLNPNGAKRLYELMRGRRSIRSFNSHPKPDLSVIEDCIRAAGTAPSGAHTEPWTYCVVQEPELKRSIREIVEQEELVNYSQRMHPQWVTDLRPLQTNHVKEYLTEAPYLILIFKQTYGLSENGKRMRRHYYNEISTSIAAGILLCALQAAGLASLVTTPLNCGPALRNLLGRPVNEKLLILLPVGYPKDGCTVPDLARKNLSNIMVTF.

A helical transmembrane segment spans residues 15–34; sequence HWPSLFITLALIWIVKRLFF. FMN-binding positions include 96–100, serine 125, and 125–126; these read RRSIR and SG. Residues alanine 127, glutamate 154, tyrosine 158, and lysine 179 each contribute to the 3,5-diiodo-L-tyrosine site. 4 residues coordinate 3-iodo-L-tyrosine: alanine 127, glutamate 154, tyrosine 158, and lysine 179. Residues 235 to 237 and arginine 277 each bind FMN; that span reads VTT.

The protein belongs to the nitroreductase family. Homodimer. Requires FMN as cofactor. As to expression, expressed in spermatocytes.

The protein resides in the cell membrane. The enzyme catalyses 2 iodide + L-tyrosine + 2 NADP(+) = 3,5-diiodo-L-tyrosine + 2 NADPH + H(+). The catalysed reaction is iodide + L-tyrosine + NADP(+) = 3-iodo-L-tyrosine + NADPH. It carries out the reaction 3-iodo-L-tyrosine + iodide + NADP(+) = 3,5-diiodo-L-tyrosine + NADPH + H(+). It catalyses the reaction L-tyrosine + chloride + NADP(+) = 3-chloro-L-tyrosine + NADPH. The enzyme catalyses bromide + L-tyrosine + NADP(+) = 3-bromo-L-tyrosine + NADPH. In terms of biological role, catalyzes the dehalogenation of halotyrosines such as 3-bromo-L-tyrosine, 3-chloro-L-tyrosine, 3-iodo-L-tyrosine and 3,5-diiodo-L-tyrosine. Activity towards 3-fluoro-L-tyrosine is weak. Important for male and female fertility. May be involved in maintaining the viability of sperm, both during development in the testes and storage in the female spermatheca. This chain is Iodotyrosine deiodinase, found in Drosophila melanogaster (Fruit fly).